The sequence spans 230 residues: MERRGRATEAFFGRRKGKALREQQAETLNSLLPAFLIDLSAAPPEPLTSLFPVPVTTLRLEIGFGGGEHLIHRALERPSTGFIGVEPFVNSMQKLLARAGQTGARNIRVYNDDATQLLDWLPDASLDQIDLLYPDPWPKRKHWKRRFVSKTNLDRFHRVLKPGGLFCFASDIDTYVNWTLLKCRDHSGFDWIADNAADWLTPYEGWPSTRYEAKARREGRSSAYLTFRKI.

S-adenosyl-L-methionine is bound by residues glutamate 61, glutamate 86, aspartate 113, and aspartate 135. Residue aspartate 135 is part of the active site. Residues lysine 139, aspartate 171, and 209–212 contribute to the substrate site; that span reads TRYE.

The protein belongs to the class I-like SAM-binding methyltransferase superfamily. TrmB family.

The enzyme catalyses guanosine(46) in tRNA + S-adenosyl-L-methionine = N(7)-methylguanosine(46) in tRNA + S-adenosyl-L-homocysteine. It functions in the pathway tRNA modification; N(7)-methylguanine-tRNA biosynthesis. In terms of biological role, catalyzes the formation of N(7)-methylguanine at position 46 (m7G46) in tRNA. This chain is tRNA (guanine-N(7)-)-methyltransferase, found in Rhizobium etli (strain ATCC 51251 / DSM 11541 / JCM 21823 / NBRC 15573 / CFN 42).